The primary structure comprises 722 residues: Protein HAPLESS 2-A (722 aa).

Positions 1–24 (MPRRRGTPLPTILLLLAFVGGACG) are cleaved as a signal peptide. The Extracellular segment spans residues 25–552 (TEILSKSRLE…LFDFGCHIQY (528 aa)). 7 disulfides stabilise this stretch: Cys-36/Cys-48, Cys-129/Cys-159, Cys-141/Cys-188, Cys-160/Cys-315, Cys-162/Cys-171, Cys-298/Cys-322, and Cys-435/Cys-473. A helical membrane pass occupies residues 553–573 (VCIGWILLLLLIPAAVVFLWL). The Cytoplasmic portion of the chain corresponds to 574–722 (LHQEGLFDPL…HRDGHYSPSV (149 aa)). The span at 598–641 (RRRHQKGRHHRHHHDHRHRHGHSHGDHHHHYHGGHHQRRRHHHP) shows a compositional bias: basic residues. Disordered stretches follow at residues 598 to 665 (RRRH…RNHH) and 680 to 722 (RLDR…SPSV). Positions 646-662 (VEGHHHDRQQHSHEAGR) are enriched in basic and acidic residues. Residues 701 to 711 (RRSRHERHGGH) are compositionally biased toward basic residues. Residues 712 to 722 (GHRDGHYSPSV) show a composition bias toward basic and acidic residues.

The protein belongs to the HAP2/GCS1 family.

The protein resides in the endoplasmic reticulum membrane. The protein localises to the cell membrane. Functionally, required for male fertility. Plays a role in pollen tube guidance and successful gamete attachment. Essential for the fusion of gametes during double fertilization, where one male gamete fuses with the egg to produce a zygote, and another male gamete fuses with the central cell to produce the endosperm. Mediates the fusion of cell membranes. Not required for pollen tube outgrowth. The sequence is that of Protein HAPLESS 2-A (HAP2A) from Oryza sativa subsp. japonica (Rice).